The chain runs to 125 residues: Protein ApaG (125 aa).

The ApaG domain maps to Met-1–Asn-125.

This Edwardsiella ictaluri (strain 93-146) protein is Protein ApaG.